A 56-amino-acid chain; its full sequence is Endoglucanase Cel5A (56 aa).

The Nucleophile role is filled by E45.

The protein belongs to the glycosyl hydrolase 5 (cellulase A) family.

Its subcellular location is the secreted. It is found in the extracellular space. It carries out the reaction Endohydrolysis of (1-&gt;4)-beta-D-glucosidic linkages in cellulose, lichenin and cereal beta-D-glucans.. In terms of biological role, has avicelase and carboxymethylcellulase activity. In Gloeophyllum trabeum (Brown rot fungus), this protein is Endoglucanase Cel5A.